We begin with the raw amino-acid sequence, 485 residues long: 3-isopropylmalate dehydratase large subunit (485 aa).

2 disordered regions span residues 1-20 (MSDASSTAPSQAGATSQSTG) and 73-92 (PERTIATPDHNVPTSDRSLP). [4Fe-4S] cluster contacts are provided by cysteine 364, cysteine 424, and cysteine 427.

This sequence belongs to the aconitase/IPM isomerase family. LeuC type 1 subfamily. In terms of assembly, heterodimer of LeuC and LeuD. [4Fe-4S] cluster is required as a cofactor.

The enzyme catalyses (2R,3S)-3-isopropylmalate = (2S)-2-isopropylmalate. It functions in the pathway amino-acid biosynthesis; L-leucine biosynthesis; L-leucine from 3-methyl-2-oxobutanoate: step 2/4. In terms of biological role, catalyzes the isomerization between 2-isopropylmalate and 3-isopropylmalate, via the formation of 2-isopropylmaleate. The chain is 3-isopropylmalate dehydratase large subunit from Rhodopirellula baltica (strain DSM 10527 / NCIMB 13988 / SH1).